We begin with the raw amino-acid sequence, 151 residues long: Large ribosomal subunit protein uL15 (151 aa).

Residues M1 to T51 are disordered. Over residues R23–A33 the composition is skewed to gly residues.

Belongs to the universal ribosomal protein uL15 family. In terms of assembly, part of the 50S ribosomal subunit.

Functionally, binds to the 23S rRNA. In Petrotoga mobilis (strain DSM 10674 / SJ95), this protein is Large ribosomal subunit protein uL15.